A 143-amino-acid chain; its full sequence is Large ribosomal subunit protein uL11 (143 aa).

This sequence belongs to the universal ribosomal protein uL11 family. As to quaternary structure, part of the ribosomal stalk of the 50S ribosomal subunit. Interacts with L10 and the large rRNA to form the base of the stalk. L10 forms an elongated spine to which L12 dimers bind in a sequential fashion forming a multimeric L10(L12)X complex. Post-translationally, one or more lysine residues are methylated.

Its function is as follows. Forms part of the ribosomal stalk which helps the ribosome interact with GTP-bound translation factors. This chain is Large ribosomal subunit protein uL11, found in Paraburkholderia phymatum (strain DSM 17167 / CIP 108236 / LMG 21445 / STM815) (Burkholderia phymatum).